The sequence spans 298 residues: Biphenyl-2,3-diol 1,2-dioxygenase (298 aa).

2 consecutive VOC domains span residues 5–119 (SLGY…IYYG) and 143–264 (GLGH…YGWS). Positions 146, 210, and 260 each coordinate Fe cation.

The protein belongs to the extradiol ring-cleavage dioxygenase family. In terms of assembly, homooctamer. The enzyme is composed of two planar tetramers rotated at 45 degrees relative to each other, with a channel in the middle. The cofactor is Fe(2+).

It catalyses the reaction biphenyl-2,3-diol + O2 = 2-hydroxy-6-oxo-6-phenylhexa-2,4-dienoate + H(+). The protein operates within xenobiotic degradation; biphenyl degradation; 2-hydroxy-2,4-pentadienoate and benzoate from biphenyl: step 3/4. In terms of biological role, shows a preference for catechols with groups immediately adjacent to the hydroxyl substituents. The protein is Biphenyl-2,3-diol 1,2-dioxygenase (bphC) of Paraburkholderia xenovorans (strain LB400).